A 249-amino-acid polypeptide reads, in one-letter code: Short-chain dehydrogenase virB (249 aa).

NADP(+) is bound by residues Ile16, Arg104, Tyr150, Lys154, Val183, and Thr185. The active-site Proton donor is the Tyr150. Lys154 acts as the Lowers pKa of active site Tyr in catalysis.

The protein belongs to the short-chain dehydrogenases/reductases (SDR) family.

It functions in the pathway secondary metabolite biosynthesis. Its function is as follows. Short-chain dehydrogenase; part of the gene cluster that mediates the biosynthesis of virensols and trichoxide, fungal natural products that contain or are derived from a salicylaldehyde core. The pathway begins with the synthesis of the reduced chain in virensol C by the highly reducing polyketide synthase virA via condensation of one acetate and 8 malonate units. VirA has interesting programming rules since the first 2 ketides are fully reduced, the 3 following ketides undergo beta-dehydration, and the last 3 ketides are only reduced to beta-hydroxys to yield the trihydroxy portion. The production of aldehyde virensol C by virA alone is surprising, since virA does not contain a reductase (R) domain that is typically associated with reductive product release in HRPKS. The cupin-domain enzyme virC is involved in enhancing virA product turnover. The short-chain dehydrogenase virB then oxidizes the C-7 alcohol of virensol C to a ketone, yielding virensol D. Virensol D is further transformed to salicylaldehyde 5-deoxyaurocitrin by the short-chain dehydrogenase virD. VirD catalyzes the dehydrogenation of C-3 to form the beta-ketone aldehyde, which is followed by the generation of the nucleophilic C-2 that is required for the intramolecular aldol condensation between C-2 and C-7, itself followed by dehydration and aromatization which leads to salicylaldehyde 5-deoxyaurocitrin. While the dehydrogenation of virensol D is definitely catalyzed by virD, the aldol condensation and dehydration may be uncatalyzed or assisted by virD. The short chain dehydrogenase virG then converts salicylaldehyde 5-deoxyaurocitrin into virensol B which is further hydroxylated by the cytochrome P450 monooxygenase virE to yield the hydroquinone virensol A. VirI then may oxidize virensol A to form the quinone, while virH performs the epoxidation. Finally, the two remaining short-chain dehydrogenases, virK and virL, are probably responsible for reducing the ketones to the corresponding alcohols to furnish the epoxycyclohexanol structure in trichoxide. In Hypocrea virens (strain Gv29-8 / FGSC 10586) (Gliocladium virens), this protein is Short-chain dehydrogenase virB.